We begin with the raw amino-acid sequence, 94 residues long: MLKPLENRVVLRVKEEEEKSMGGIVLTSASQEKPQTAEVIAVGEGKTTNHGTLISPLVKVGDTVIFEKFAGTTVKMDGEEFLILKDSDLLAIVE.

The protein belongs to the GroES chaperonin family. In terms of assembly, heptamer of 7 subunits arranged in a ring. Interacts with the chaperonin GroEL.

Its subcellular location is the cytoplasm. In terms of biological role, together with the chaperonin GroEL, plays an essential role in assisting protein folding. The GroEL-GroES system forms a nano-cage that allows encapsulation of the non-native substrate proteins and provides a physical environment optimized to promote and accelerate protein folding. GroES binds to the apical surface of the GroEL ring, thereby capping the opening of the GroEL channel. The sequence is that of Co-chaperonin GroES from Lactococcus lactis subsp. cremoris (strain MG1363).